The primary structure comprises 57 residues: DNA-directed RNA polymerase subunit Rpo6 (57 aa).

Belongs to the archaeal Rpo6/eukaryotic RPB6 RNA polymerase subunit family. In terms of assembly, part of the RNA polymerase complex.

It localises to the cytoplasm. It catalyses the reaction RNA(n) + a ribonucleoside 5'-triphosphate = RNA(n+1) + diphosphate. DNA-dependent RNA polymerase (RNAP) catalyzes the transcription of DNA into RNA using the four ribonucleoside triphosphates as substrates. The polypeptide is DNA-directed RNA polymerase subunit Rpo6 (Haloarcula marismortui (strain ATCC 43049 / DSM 3752 / JCM 8966 / VKM B-1809) (Halobacterium marismortui)).